Here is a 194-residue protein sequence, read N- to C-terminus: Large ribosomal subunit protein bL17 (194 aa).

The segment at 126 to 194 (AEPKQTKART…SPEQTNKQEE (69 aa)) is disordered. Residues 131-140 (TKARTRRGKG) show a composition bias toward basic residues. Polar residues-rich tracts occupy residues 144–161 (ATTT…QDMA) and 181–194 (LDTQ…KQEE).

This sequence belongs to the bacterial ribosomal protein bL17 family. As to quaternary structure, part of the 50S ribosomal subunit. Contacts protein L32.

This Amoebophilus asiaticus (strain 5a2) protein is Large ribosomal subunit protein bL17.